The chain runs to 760 residues: MMIRELDIPRDIIGFYEDSGIKELYPPQAEAIEMGLLEKKNLLAAIPTASGKTLLAELAMIKAIREGGKALYIVPLRALASEKFERFKELAPFGIKVGISTGDLDSRADWLGVNDIIVATSEKTDSLLRNGTSWMDEITTVVVDEIHLLDSKNRGPTLEVTITKLMRLNPDVQVVALSATVGNAREMADWLGAALVLSEWRPTDLHEGVLFGDAINFPGSQKKIDRLEKDDAVNLVLDTIKAEGQCLVFESSRRNCAGFAKTASSKVAKILDNDIMIKLAGIAEEVESTGETDTAIVLANCIRKGVAFHHAGLNSNHRKLVENGFRQNLIKVISSTPTLAAGLNLPARRVIIRSYRRFDSNFGMQPIPVLEYKQMAGRAGRPHLDPYGESVLLAKTYDEFAQLMENYVEADAEDIWSKLGTENALRTHVLSTIVNGFASTRQELFDFFGATFFAYQQDKWMLEEVINDCLEFLIDKAMVSETEDIEDASKLFLRGTRLGSLVSMLYIDPLSGSKIVDGFKDIGKSTGGNMGSLEDDKGDDITVTDMTLLHLVCSTPDMRQLYLRNTDYTIVNEYIVAHSDEFHEIPDKLKETDYEWFMGEVKTAMLLEEWVTEVSAEDITRHFNVGEGDIHALADTSEWLMHAAAKLAELLGVEYSSHAYSLEKRIRYGSGLDLMELVGIRGVGRVRARKLYNAGFVSVAKLKGADISVLSKLVGPKVAYNILSGIGVRVNDKHFNSAPISSNTLDTLLDKNQKTFNDFQ.

ATP-binding positions include Gln-28 and 46–53 (IPTASGKT). In terms of domain architecture, Helicase ATP-binding spans 33-199 (EMGLLEKKNL…WLGAALVLSE (167 aa)). The DEAH box signature appears at 144-147 (DEIH). The Helicase C-terminal domain occupies 232–426 (AVNLVLDTIK…SKLGTENALR (195 aa)).

It belongs to the helicase family. Hel308 subfamily. As to quaternary structure, monomer.

It catalyses the reaction Couples ATP hydrolysis with the unwinding of duplex DNA by translocating in the 3'-5' direction.. The enzyme catalyses ATP + H2O = ADP + phosphate + H(+). Its function is as follows. DNA-dependent ATPase and 3'-5' DNA helicase that may be involved in repair of stalled replication forks. This Methanococcoides burtonii (strain DSM 6242 / NBRC 107633 / OCM 468 / ACE-M) protein is ATP-dependent DNA helicase Hel308.